The sequence spans 513 residues: GMP synthase [glutamine-hydrolyzing] (513 aa).

The region spanning 7-197 (TILVLDFGGQ…LFGVCGCTGE (191 aa)) is the Glutamine amidotransferase type-1 domain. Residue Cys-84 is the Nucleophile of the active site. Catalysis depends on residues His-171 and Glu-173. The region spanning 198 to 387 (WTMENFIEEQ…LGLPEDIVWR (190 aa)) is the GMPS ATP-PPase domain. 225 to 231 (SGGVDSS) lines the ATP pocket.

In terms of assembly, homodimer.

It carries out the reaction XMP + L-glutamine + ATP + H2O = GMP + L-glutamate + AMP + diphosphate + 2 H(+). The protein operates within purine metabolism; GMP biosynthesis; GMP from XMP (L-Gln route): step 1/1. Its function is as follows. Catalyzes the synthesis of GMP from XMP. This Heliobacterium modesticaldum (strain ATCC 51547 / Ice1) protein is GMP synthase [glutamine-hydrolyzing].